Consider the following 443-residue polypeptide: Xaa-Pro dipeptidase (443 aa).

Mn(2+) contacts are provided by Asp-241, Asp-252, His-333, Glu-378, and Glu-417.

This sequence belongs to the peptidase M24B family. Bacterial-type prolidase subfamily. Mn(2+) serves as cofactor.

The catalysed reaction is Xaa-L-Pro dipeptide + H2O = an L-alpha-amino acid + L-proline. Splits dipeptides with a prolyl residue in the C-terminal position. This Actinobacillus pleuropneumoniae serotype 5b (strain L20) protein is Xaa-Pro dipeptidase.